The sequence spans 422 residues: Cytokine receptor-like factor 1 (422 aa).

The first 37 residues, 1–37 (MPAGRRGPAAQSARRPPPLLPLLLLLCVLGAPRAGSG), serve as a signal peptide directing secretion. Positions 38-131 (AHTAVISPQD…SILAGSCLYV (94 aa)) constitute an Ig-like C2-type domain. Residues asparagine 92, asparagine 104, and asparagine 140 are each glycosylated (N-linked (GlcNAc...) asparagine). 2 consecutive Fibronectin type-III domains span residues 137 to 232 (KPVN…ILDV) and 237 to 341 (PPPD…TPRS). Cysteine 143 and cysteine 153 are disulfide-bonded. A glycan (N-linked (GlcNAc...) asparagine) is linked at asparagine 168. Residues cysteine 184 and cysteine 195 are joined by a disulfide bond. Serine 219 is subject to Phosphoserine. N-linked (GlcNAc...) asparagine glycosylation occurs at asparagine 292. Positions 327 to 331 (WSEWS) match the WSXWS motif motif. The interval 332–363 (HPTAASTPRSERPGPGGGACEPRGGEPSSGPV) is disordered. Residue asparagine 382 is glycosylated (N-linked (GlcNAc...) asparagine). A disordered region spans residues 399 to 422 (HKTRNQDEGILPSGRRGTARGPAR).

This sequence belongs to the type I cytokine receptor family. Type 3 subfamily. As to quaternary structure, forms covalent di- and tetramers. Forms a heteromeric complex with cardiotrophin-like cytokine CLCF1/CLC; the CRLF1-CLCF1 complex is a ligand for the ciliary neurotrophic factor receptor/CNTFR. The CRLF1-CLCF1 heterodimer binds SORL1 (via N-terminal ectodomain); within this complex, the interaction is mediated predominantly by the CRLF1 moiety. The tripartite signaling complex formed by CRLF1, CLCF1 and CNTFR also binds SORL1. Highest levels of expression observed in spleen, thymus, lymph node, appendix, bone marrow, stomach, placenta, heart, thyroid and ovary. Strongly expressed also in fetal lung.

It localises to the secreted. Its function is as follows. In complex with CLCF1, forms a heterodimeric neurotropic cytokine that plays a crucial role during neuronal development. May also play a regulatory role in the immune system. In Homo sapiens (Human), this protein is Cytokine receptor-like factor 1 (CRLF1).